The following is a 356-amino-acid chain: Glutamine synthetase root isozyme 3 (356 aa).

The 81-residue stretch at 19–99 folds into the GS beta-grasp domain; sequence IIAEYIWIGG…VMCDCYTPAG (81 aa). One can recognise a GS catalytic domain in the interval 106–356; that stretch reads KRYNAAKIFS…IAETTIIWKP (251 aa).

Belongs to the glutamine synthetase family. In terms of assembly, homooctamer. Found in all the tissues examined with higher expression found in tissues of the root.

The protein resides in the cytoplasm. It carries out the reaction L-glutamate + NH4(+) + ATP = L-glutamine + ADP + phosphate + H(+). In terms of biological role, plays a role in the flow of nitrogen into nitrogenous organic compounds. The chain is Glutamine synthetase root isozyme 3 (GLN4) from Zea mays (Maize).